We begin with the raw amino-acid sequence, 524 residues long: Cytochrome P450 monooxygenase drtD (524 aa).

A helical membrane pass occupies residues 2 to 22 (SDTYLVAASGLAVCFFVLYLL). Cys418 serves as a coordination point for heme.

It belongs to the cytochrome P450 family. Heme is required as a cofactor.

It localises to the membrane. The protein operates within secondary metabolite biosynthesis; terpenoid biosynthesis. Its function is as follows. Cytochrome P450 monooxygenase; part of the gene cluster that mediates the biosynthesis of various drimane-type sesquiterpene esters, compounds that exhibit diverse biological activities and are widely present in eukaryotes. The pathway begins with the synthesis of the backbone drimenol by the terpene cyclase drtB using farnesyl pyrophosphate (FPP) as substrate. The cytochrome P450 monooxygenase drtD is then responsible for the hydroxylations at C-6, C-9 and C-12, as well as the oxidation of hydroxyl groups at C-6 and C-11 to a ketone and an aldehyde, respectively. Then, the biosynthesis can go in two directions, either the hydroxylated drimenol is further hydroxylated at C-2 and C-3 by an enzyme(s) not associated with the drt cluster, or the FAD-binding oxidoreductase drtC further oxidizes C-11 or C-12 to form the butyrolactone ring. DrtB, drtD and drtC are solely responsible for the formation of the different drimane structures observed during drimane sesquiterpenes biosynthesis. The polyketide synthase drtA synthesizes different lengths (C6 and C8) of PKS chains, which are then oxidized to varying degrees by the short-chain dehydrogenase drtF. Finally, these PKS chains are transferred onto drimane sesquiterpenes by the acyltransferase drtE, forming the sesquiterpene esters. In addition to the different fatty acyl-CoA chains produced by drtA, drtE is also able to use cinnamoyl-CoA as a substrate. The polypeptide is Cytochrome P450 monooxygenase drtD (Aspergillus calidoustus).